Here is a 293-residue protein sequence, read N- to C-terminus: Undecaprenyl-diphosphatase (293 aa).

The next 7 membrane-spanning stretches (helical) occupy residues 57-77 (PGVS…IVYF), 106-126 (LAIA…KLFW), 134-154 (IRSL…LALA), 172-192 (GFVV…RSGS), 212-232 (FLLG…DAFA), 239-259 (VLPL…AIDW), and 268-288 (STWI…AWWL).

Belongs to the UppP family.

Its subcellular location is the cell inner membrane. It catalyses the reaction di-trans,octa-cis-undecaprenyl diphosphate + H2O = di-trans,octa-cis-undecaprenyl phosphate + phosphate + H(+). Functionally, catalyzes the dephosphorylation of undecaprenyl diphosphate (UPP). Confers resistance to bacitracin. This chain is Undecaprenyl-diphosphatase, found in Prochlorococcus marinus (strain MIT 9303).